The sequence spans 425 residues: Trigger factor (425 aa).

In terms of domain architecture, PPIase FKBP-type spans G163–P248.

This sequence belongs to the FKBP-type PPIase family. Tig subfamily.

The protein resides in the cytoplasm. It carries out the reaction [protein]-peptidylproline (omega=180) = [protein]-peptidylproline (omega=0). In terms of biological role, involved in protein export. Acts as a chaperone by maintaining the newly synthesized protein in an open conformation. Functions as a peptidyl-prolyl cis-trans isomerase. The sequence is that of Trigger factor from Bacillus cereus (strain G9842).